The following is a 192-amino-acid chain: Large ribosomal subunit protein bL25 (192 aa).

The protein belongs to the bacterial ribosomal protein bL25 family. CTC subfamily. Part of the 50S ribosomal subunit; part of the 5S rRNA/L5/L18/L25 subcomplex. Contacts the 5S rRNA. Binds to the 5S rRNA independently of L5 and L18.

This is one of the proteins that binds to the 5S RNA in the ribosome where it forms part of the central protuberance. In Cytophaga hutchinsonii (strain ATCC 33406 / DSM 1761 / CIP 103989 / NBRC 15051 / NCIMB 9469 / D465), this protein is Large ribosomal subunit protein bL25.